We begin with the raw amino-acid sequence, 493 residues long: MTPARRSALSLALLLVALASDLAAGLKCVCLLCDSSNFTCQTEGACWASVMLTNGKEQVSKSCVSLPELNAQVFCHSSNNVTKTECCFTDFCNNITQHLPTASPDAPRLGPTELTVVITVPVCLLSIAAMLTIWACQDRQCTYRKTKRHNVEEPLAEYSLVNAGKTLKDLIYDATASGSGSGPPLLVQRTIARTIVLQEIVGKGRFGEVWHGRWCGEDVAVKIFSSRDERSWFREAEIYQTVMLRHENILGFIAADNKDNGTWTQLWLVSEYHEQGSLYDYLNRNIVTVAGMVKLALSIASGLAHLHMEIVGTQGKPAIAHRDIKSKNILVKKCDTCAIADLGLAVKHDSIMNTIDIPQNPKVGTKRYMAPEMLDDTMNVNIFESFKRADIYSVGLVYWEIARRCSVGGLVEEYQLPYYDMVPSDPSIEEMRKVVCDQKLRPNLPNQWQSCEALRVMGRIMRECWYANGAARLTALRVKKTISQLCVKEDCKA.

The signal sequence occupies residues 1–25 (MTPARRSALSLALLLVALASDLAAG). Residues 26-113 (LKCVCLLCDS…PDAPRLGPTE (88 aa)) are Extracellular-facing. The helical transmembrane segment at 114–134 (LTVVITVPVCLLSIAAMLTIW) threads the bilayer. Residues 135–493 (ACQDRQCTYR…QLCVKEDCKA (359 aa)) lie on the Cytoplasmic side of the membrane. The GS domain occupies 165–194 (KTLKDLIYDATASGSGSGPPLLVQRTIART). The Protein kinase domain maps to 195 to 485 (IVLQEIVGKG…LRVKKTISQL (291 aa)). ATP is bound by residues 201–209 (VGKGRFGEV) and K222. The active-site Proton acceptor is D323.

It belongs to the protein kinase superfamily. TKL Ser/Thr protein kinase family. TGFB receptor subfamily. Binds the type 2 receptor protein ACVR2A. It depends on Mg(2+) as a cofactor. The cofactor is Mn(2+). Expressed in brain, kidney, lung, liver, testis, ovary, adrenal gland, heart, prostate, gastrointestinal tract, and spleen. Distributed throughout both adult and embryonic central nervous system and pancreatic islet cells.

It is found in the membrane. It carries out the reaction L-threonyl-[receptor-protein] + ATP = O-phospho-L-threonyl-[receptor-protein] + ADP + H(+). The enzyme catalyses L-seryl-[receptor-protein] + ATP = O-phospho-L-seryl-[receptor-protein] + ADP + H(+). In terms of biological role, serine/threonine protein kinase which forms a receptor complex on ligand binding. The receptor complex consists of 2 type II and 2 type I transmembrane serine/threonine kinases. Type II receptors phosphorylate and activate type I receptors which autophosphorylate, then bind and activate SMAD transcriptional regulators, SMAD2 and SMAD3. Receptor for activin AB, activin B, activin E and NODAL. Upon NODAL binding, activation results in increased apoptosis and reduced proliferation through suppression of AKT signaling and the activation of Smad2-dependent signaling pathway in pancreatic beta-cells, trophoblasts, epithelial or neuronal cells. Acts as a positive regulator for macrophage activation partially through down-regulation of PPARG expression. The protein is Activin receptor type-1C of Rattus norvegicus (Rat).